Consider the following 940-residue polypeptide: Beta-mannosidase A (940 aa).

The signal sequence occupies residues 1-21 (MHFHGIATQAVLASNITTGSG). Residues Asn15, Asn39, Asn79, Asn245, Asn314, Asn321, and Asn344 are each glycosylated (N-linked (GlcNAc...) asparagine). Glu476 serves as the catalytic Proton donor. N-linked (GlcNAc...) asparagine glycans are attached at residues Asn534, Asn605, Asn626, Asn653, Asn733, Asn761, and Asn785.

It belongs to the glycosyl hydrolase 2 family. Beta-mannosidase A subfamily. In terms of assembly, homodimer.

It localises to the secreted. The enzyme catalyses Hydrolysis of terminal, non-reducing beta-D-mannose residues in beta-D-mannosides.. Its pathway is glycan metabolism; N-glycan degradation. Functionally, exoglycosidase that cleaves the single beta-linked mannose residue from the non-reducing end of beta-mannosidic oligosaccharides of various complexity and length. Involved in the degradation of polymeric mannan and galactomannan. This Emericella nidulans (strain FGSC A4 / ATCC 38163 / CBS 112.46 / NRRL 194 / M139) (Aspergillus nidulans) protein is Beta-mannosidase A (mndA).